The chain runs to 393 residues: F-box/kelch-repeat protein At4g19865 (393 aa).

The tract at residues M1–L30 is disordered. The 47-residue stretch at S27–R73 folds into the F-box domain. Kelch repeat units lie at residues E148–G190, K191–V237, E239–S272, and E273–S320.

The polypeptide is F-box/kelch-repeat protein At4g19865 (Arabidopsis thaliana (Mouse-ear cress)).